A 352-amino-acid chain; its full sequence is Mitochondrial ubiquitin ligase activator of NFKB 1 (352 aa).

Residues 1–8 (MESGGRPS) are Cytoplasmic-facing. Residues 9 to 29 (LCQFILLGTTSVVTAALYSVY) traverse the membrane as a helical segment. Topologically, residues 30-238 (RQKARVSQEL…LLQRQESSVR (209 aa)) are mitochondrial intermembrane. K52 participates in a covalent cross-link: Glycyl lysine isopeptide (Lys-Gly) (interchain with G-Cter in ubiquitin). A helical transmembrane segment spans residues 239–259 (LWKVLALVFGFATCATLFFIL). Residues 260-352 (RKQYLQRQER…ITRVIPLYNS (93 aa)) lie on the Cytoplasmic side of the membrane. Residues K273 and K299 each participate in a glycyl lysine isopeptide (Lys-Gly) (interchain with G-Cter in ubiquitin) cross-link. Residues 302-340 (CVVCLSSFKSCVFLECGHVCSCTECYRALPEPKKCPICR) form an RING-type zinc finger.

Homooligomer. Interacts with MAP3K7/TAK1. Interacts with UBC9. Interacts with and sumoylates DNM1L. Interacts with MAVS. Interacts with TP53 (via N-terminus); the interaction leads to ubiquitination and proteasomal degradation of TP53. In terms of processing, ubiquitinated by PRKN during mitophagy, leading to its degradation and enhancement of mitophagy. Deubiquitinated by USP30. Widely expressed with highest levels in the heart, skeletal muscle, placenta, kidney and liver. Barely detectable in colon and thymus.

Its subcellular location is the mitochondrion outer membrane. It is found in the peroxisome. The enzyme catalyses S-ubiquitinyl-[E2 ubiquitin-conjugating enzyme]-L-cysteine + [acceptor protein]-L-lysine = [E2 ubiquitin-conjugating enzyme]-L-cysteine + N(6)-ubiquitinyl-[acceptor protein]-L-lysine.. The protein operates within protein modification; protein ubiquitination. It participates in protein modification; protein sumoylation. In terms of biological role, exhibits weak E3 ubiquitin-protein ligase activity. E3 ubiquitin ligases accept ubiquitin from an E2 ubiquitin-conjugating enzyme in the form of a thioester and then directly transfer the ubiquitin to targeted substrates. Can ubiquitinate AKT1 preferentially at 'Lys-284' involving 'Lys-48'-linked polyubiquitination and seems to be involved in regulation of Akt signaling by targeting phosphorylated Akt to proteasomal degradation. Mediates polyubiquitination of cytoplasmic TP53 at 'Lys-24' which targets TP53 for proteasomal degradation, thus reducing TP53 levels in the cytoplasm and mitochondrion. Proposed to preferentially act as a SUMO E3 ligase at physiological concentrations. Plays a role in the control of mitochondrial morphology by promoting mitochondrial fragmentation, and influences mitochondrial localization. Likely to promote mitochondrial fission through negatively regulating the mitochondrial fusion proteins MFN1 and MFN2, acting in a pathway that is parallel to the PRKN/PINK1 regulatory pathway. May also be involved in the sumoylation of the membrane fission protein DNM1L. Inhibits cell growth. When overexpressed, activates JNK through MAP3K7/TAK1 and induces caspase-dependent apoptosis. Involved in the modulation of innate immune defense against viruses by inhibiting RIGI-dependent antiviral response. Can mediate RIGI sumoylation and disrupt its polyubiquitination. The chain is Mitochondrial ubiquitin ligase activator of NFKB 1 (MUL1) from Homo sapiens (Human).